Consider the following 147-residue polypeptide: Peptide deformylase 1 (147 aa).

Positions 90 and 132 each coordinate Fe cation. Glutamate 133 is a catalytic residue. Histidine 136 contributes to the Fe cation binding site.

This sequence belongs to the polypeptide deformylase family. The cofactor is Fe(2+).

The catalysed reaction is N-terminal N-formyl-L-methionyl-[peptide] + H2O = N-terminal L-methionyl-[peptide] + formate. In terms of biological role, removes the formyl group from the N-terminal Met of newly synthesized proteins. Requires at least a dipeptide for an efficient rate of reaction. N-terminal L-methionine is a prerequisite for activity but the enzyme has broad specificity at other positions. This Clostridium perfringens (strain 13 / Type A) protein is Peptide deformylase 1.